Here is a 316-residue protein sequence, read N- to C-terminus: N-acetylmuramic acid 6-phosphate etherase (316 aa).

Residues 66–229 (IVAAIGRGGR…STASMIRLGK (164 aa)) enclose the SIS domain. Glu94 functions as the Proton donor in the catalytic mechanism. Residue Glu125 is part of the active site.

It belongs to the GCKR-like family. MurNAc-6-P etherase subfamily. As to quaternary structure, homodimer.

It catalyses the reaction N-acetyl-D-muramate 6-phosphate + H2O = N-acetyl-D-glucosamine 6-phosphate + (R)-lactate. Its pathway is amino-sugar metabolism; 1,6-anhydro-N-acetylmuramate degradation. It functions in the pathway amino-sugar metabolism; N-acetylmuramate degradation. The protein operates within cell wall biogenesis; peptidoglycan recycling. Specifically catalyzes the cleavage of the D-lactyl ether substituent of MurNAc 6-phosphate, producing GlcNAc 6-phosphate and D-lactate. Together with AnmK, is also required for the utilization of anhydro-N-acetylmuramic acid (anhMurNAc) either imported from the medium or derived from its own cell wall murein, and thus plays a role in cell wall recycling. This Jannaschia sp. (strain CCS1) protein is N-acetylmuramic acid 6-phosphate etherase.